A 338-amino-acid chain; its full sequence is Ketol-acid reductoisomerase (NADP(+)) (338 aa).

The region spanning 1–181 is the KARI N-terminal Rossmann domain; the sequence is MKIYYDKDCN…GGGRAGIIET (181 aa). Residues 24-27, K47, S50, S52, and 82-85 contribute to the NADP(+) site; these read YGSQ and DEIQ. H107 is a catalytic residue. G133 lines the NADP(+) pocket. Positions 182-327 constitute a KARI C-terminal knotted domain; it reads SFKEETETDL…ARLRSMMSWI (146 aa). Mg(2+) is bound by residues D190, E194, E226, and E230. S251 is a substrate binding site.

Belongs to the ketol-acid reductoisomerase family. Mg(2+) serves as cofactor.

It carries out the reaction (2R)-2,3-dihydroxy-3-methylbutanoate + NADP(+) = (2S)-2-acetolactate + NADPH + H(+). The catalysed reaction is (2R,3R)-2,3-dihydroxy-3-methylpentanoate + NADP(+) = (S)-2-ethyl-2-hydroxy-3-oxobutanoate + NADPH + H(+). It functions in the pathway amino-acid biosynthesis; L-isoleucine biosynthesis; L-isoleucine from 2-oxobutanoate: step 2/4. Its pathway is amino-acid biosynthesis; L-valine biosynthesis; L-valine from pyruvate: step 2/4. Functionally, involved in the biosynthesis of branched-chain amino acids (BCAA). Catalyzes an alkyl-migration followed by a ketol-acid reduction of (S)-2-acetolactate (S2AL) to yield (R)-2,3-dihydroxy-isovalerate. In the isomerase reaction, S2AL is rearranged via a Mg-dependent methyl migration to produce 3-hydroxy-3-methyl-2-ketobutyrate (HMKB). In the reductase reaction, this 2-ketoacid undergoes a metal-dependent reduction by NADPH to yield (R)-2,3-dihydroxy-isovalerate. This is Ketol-acid reductoisomerase (NADP(+)) from Geobacter sulfurreducens (strain ATCC 51573 / DSM 12127 / PCA).